We begin with the raw amino-acid sequence, 255 residues long: Reticulon-like protein B3 (255 aa).

Residues Met-1–Ser-25 are compositionally biased toward basic and acidic residues. The segment at Met-1 to Ser-38 is disordered. Ala-2 is modified (N-acetylalanine). One can recognise a Reticulon domain in the interval Pro-64–Asp-255. The next 3 helical transmembrane spans lie at Val-75–Tyr-95, Leu-97–Ser-117, and Cys-186–Tyr-206.

It localises to the endoplasmic reticulum membrane. Its subcellular location is the vacuole membrane. The chain is Reticulon-like protein B3 (RTNLB3) from Arabidopsis thaliana (Mouse-ear cress).